The chain runs to 334 residues: DNA-directed RNA polymerase subunit alpha (334 aa).

Residues 1-234 (MQRSLNEFLT…QQLAVFVDFD (234 aa)) form an alpha N-terminal domain (alpha-NTD) region. Positions 248–334 (IDPILLRPVD…IRGDDRVLGG (87 aa)) are alpha C-terminal domain (alpha-CTD).

This sequence belongs to the RNA polymerase alpha chain family. Homodimer. The RNAP catalytic core consists of 2 alpha, 1 beta, 1 beta' and 1 omega subunit. When a sigma factor is associated with the core the holoenzyme is formed, which can initiate transcription.

It catalyses the reaction RNA(n) + a ribonucleoside 5'-triphosphate = RNA(n+1) + diphosphate. Its function is as follows. DNA-dependent RNA polymerase catalyzes the transcription of DNA into RNA using the four ribonucleoside triphosphates as substrates. The chain is DNA-directed RNA polymerase subunit alpha from Hahella chejuensis (strain KCTC 2396).